A 167-amino-acid chain; its full sequence is Crossover junction endodeoxyribonuclease RuvC (167 aa).

Catalysis depends on residues Asp8, Glu68, and Asp140. Residues Asp8, Glu68, and Asp140 each coordinate Mg(2+).

The protein belongs to the RuvC family. As to quaternary structure, homodimer which binds Holliday junction (HJ) DNA. The HJ becomes 2-fold symmetrical on binding to RuvC with unstacked arms; it has a different conformation from HJ DNA in complex with RuvA. In the full resolvosome a probable DNA-RuvA(4)-RuvB(12)-RuvC(2) complex forms which resolves the HJ. The cofactor is Mg(2+).

The protein localises to the cytoplasm. It catalyses the reaction Endonucleolytic cleavage at a junction such as a reciprocal single-stranded crossover between two homologous DNA duplexes (Holliday junction).. In terms of biological role, the RuvA-RuvB-RuvC complex processes Holliday junction (HJ) DNA during genetic recombination and DNA repair. Endonuclease that resolves HJ intermediates. Cleaves cruciform DNA by making single-stranded nicks across the HJ at symmetrical positions within the homologous arms, yielding a 5'-phosphate and a 3'-hydroxyl group; requires a central core of homology in the junction. The consensus cleavage sequence is 5'-(A/T)TT(C/G)-3'. Cleavage occurs on the 3'-side of the TT dinucleotide at the point of strand exchange. HJ branch migration catalyzed by RuvA-RuvB allows RuvC to scan DNA until it finds its consensus sequence, where it cleaves and resolves the cruciform DNA. This is Crossover junction endodeoxyribonuclease RuvC from Sinorhizobium medicae (strain WSM419) (Ensifer medicae).